The primary structure comprises 157 residues: Small ribosomal subunit protein uS7 (157 aa).

The protein belongs to the universal ribosomal protein uS7 family. As to quaternary structure, part of the 30S ribosomal subunit. Contacts proteins S9 and S11.

In terms of biological role, one of the primary rRNA binding proteins, it binds directly to 16S rRNA where it nucleates assembly of the head domain of the 30S subunit. Is located at the subunit interface close to the decoding center, probably blocks exit of the E-site tRNA. This Eikenella corrodens protein is Small ribosomal subunit protein uS7.